Here is a 488-residue protein sequence, read N- to C-terminus: Tripartite motif-containing protein 6 (488 aa).

The segment at 15–60 (CPICLELLTEPLSIDCGHSFCQVCIIGNSNNSVFGQGGRSSCPVCR) adopts an RING-type zinc-finger fold. The B box-type zinc-finger motif lies at 92 to 133 (LEVIFCALHGEKLQLFCKEDGKLICWLCERSQEHRGHHTFLM). Zn(2+) contacts are provided by cysteine 97, histidine 100, cysteine 119, and histidine 125. A coiled-coil region spans residues 132–223 (LMEEVAQEYQ…SIIEKAEGDL (92 aa)). A B30.2/SPRY domain is found at 282 to 488 (DLRKMLKVFR…VPMTLRRPTS (207 aa)).

This sequence belongs to the TRIM/RBCC family. Homotrimer. Forms heteromultimers (via B30.2/SPRY domain) with TRIM5. Interacts with MYC. Interacts (via SPRY domain) with IKBKE. Interacts with VAMP8; this interaction contributes to the activation of the type I interferon antiviral response. Interacts with DHX16.

Its subcellular location is the cytoplasm. It carries out the reaction S-ubiquitinyl-[E2 ubiquitin-conjugating enzyme]-L-cysteine + [acceptor protein]-L-lysine = [E2 ubiquitin-conjugating enzyme]-L-cysteine + N(6)-ubiquitinyl-[acceptor protein]-L-lysine.. Its pathway is protein modification; protein ubiquitination. Functionally, E3 ubiquitin ligase that plays a crucial role in the activation of the IKBKE-dependent branch of the type I interferon signaling pathway. In concert with the ubiquitin-conjugating E2 enzyme UBE2K, synthesizes unanchored 'Lys-48'-linked polyubiquitin chains that promote the oligomerization and autophosphorylation of IKBKE leading to stimulation of an antiviral response. Also ubiquitinates MYC and inhibits its transcription activation activity, maintaining the pluripotency of embryonic stem cells. Promotes the association of unanchored 'Lys-48'-polyubiquitin chains with DHX16 leading to enhancement of RIGI-mediated innate antiviral immune response. This chain is Tripartite motif-containing protein 6 (Trim6), found in Mus musculus (Mouse).